Reading from the N-terminus, the 350-residue chain is MSLNLERNSKWMEGSGPQADIVISSRIRLARNLKGLPFPNLMNSDQQARVVSQVSRAIQAPMVFQAVGELKLQPLRELAPVERQILVEKHLISPDLAAGGGEKAVVLRDDEAVSIMVNEEDHLRLQCLLPAMMLHEAWRLADAADDALENELDFAFDQERGYLTACPTNVGTGLRASTMLHLPALVLTRQAGPVLSALTKVGVAVRGLYGEGTEAQGNIFQVSNQITLGRSEEEIINNLSAVTVRLADQEREARELLRRQSRWQLEDRVGRAYGVLTNARILSSQEALQLLSDVRLGAEMKIIRGLDQRLLNQLMVRIQPAFLQFSAGKEMTPMERDVHRAAMVRELLAG.

In terms of domain architecture, Phosphagen kinase C-terminal spans 21 to 253 (IVISSRIRLA…VRLADQEREA (233 aa)). ATP is bound by residues 24-28 (SSRIR), His90, Arg124, 175-179 (RASTM), and 206-211 (RGLYGE). The short motif at 336 to 341 (RDVHRA) is the RDXXRA motif of the pArg binding pocket involved in allosteric regulation element.

It belongs to the ATP:guanido phosphotransferase family.

The enzyme catalyses L-arginyl-[protein] + ATP = N(omega)-phospho-L-arginyl-[protein] + ADP + H(+). With respect to regulation, appears to be allosterically activated by the binding of pArg-containing polypeptides to the pArg-binding pocket localized in the C-terminal domain of McsB. Its function is as follows. Catalyzes the specific phosphorylation of arginine residues in proteins. The chain is Protein-arginine kinase from Moorella thermoacetica (strain ATCC 39073 / JCM 9320).